Here is a 313-residue protein sequence, read N- to C-terminus: Aspartate carbamoyltransferase catalytic subunit (313 aa).

Positions 58 and 59 each coordinate carbamoyl phosphate. Residue K86 coordinates L-aspartate. Residues R108, H136, and Q139 each coordinate carbamoyl phosphate. L-aspartate is bound by residues R169 and R223. 2 residues coordinate carbamoyl phosphate: G264 and P265.

This sequence belongs to the aspartate/ornithine carbamoyltransferase superfamily. ATCase family. Heterododecamer (2C3:3R2) of six catalytic PyrB chains organized as two trimers (C3), and six regulatory PyrI chains organized as three dimers (R2).

The enzyme catalyses carbamoyl phosphate + L-aspartate = N-carbamoyl-L-aspartate + phosphate + H(+). The protein operates within pyrimidine metabolism; UMP biosynthesis via de novo pathway; (S)-dihydroorotate from bicarbonate: step 2/3. Functionally, catalyzes the condensation of carbamoyl phosphate and aspartate to form carbamoyl aspartate and inorganic phosphate, the committed step in the de novo pyrimidine nucleotide biosynthesis pathway. In Chlorobium luteolum (strain DSM 273 / BCRC 81028 / 2530) (Pelodictyon luteolum), this protein is Aspartate carbamoyltransferase catalytic subunit.